A 409-amino-acid polypeptide reads, in one-letter code: DNA replication and repair protein RecF (409 aa).

An ATP-binding site is contributed by Gly30–Thr37.

This sequence belongs to the RecF family.

Its subcellular location is the cytoplasm. Its function is as follows. The RecF protein is involved in DNA metabolism; it is required for DNA replication and normal SOS inducibility. RecF binds preferentially to single-stranded, linear DNA. It also seems to bind ATP. In Rhodococcus erythropolis (strain PR4 / NBRC 100887), this protein is DNA replication and repair protein RecF.